The chain runs to 464 residues: Glutamate--tRNA ligase (464 aa).

Residues 9 to 19 (PSPTGYLHIGG) carry the 'HIGH' region motif. The 'KMSKS' region signature appears at 242–246 (KISKR). An ATP-binding site is contributed by K245.

It belongs to the class-I aminoacyl-tRNA synthetase family. Glutamate--tRNA ligase type 1 subfamily. As to quaternary structure, monomer.

It localises to the cytoplasm. It catalyses the reaction tRNA(Glu) + L-glutamate + ATP = L-glutamyl-tRNA(Glu) + AMP + diphosphate. In terms of biological role, catalyzes the attachment of glutamate to tRNA(Glu) in a two-step reaction: glutamate is first activated by ATP to form Glu-AMP and then transferred to the acceptor end of tRNA(Glu). This chain is Glutamate--tRNA ligase, found in Neisseria meningitidis serogroup B (strain ATCC BAA-335 / MC58).